A 469-amino-acid chain; its full sequence is ATP synthase subunit beta (469 aa).

155 to 162 (GGAGVGKT) lines the ATP pocket.

This sequence belongs to the ATPase alpha/beta chains family. As to quaternary structure, F-type ATPases have 2 components, CF(1) - the catalytic core - and CF(0) - the membrane proton channel. CF(1) has five subunits: alpha(3), beta(3), gamma(1), delta(1), epsilon(1). CF(0) has three main subunits: a(1), b(2) and c(9-12). The alpha and beta chains form an alternating ring which encloses part of the gamma chain. CF(1) is attached to CF(0) by a central stalk formed by the gamma and epsilon chains, while a peripheral stalk is formed by the delta and b chains.

The protein localises to the cell inner membrane. It catalyses the reaction ATP + H2O + 4 H(+)(in) = ADP + phosphate + 5 H(+)(out). Its function is as follows. Produces ATP from ADP in the presence of a proton gradient across the membrane. The catalytic sites are hosted primarily by the beta subunits. In Syntrophobacter fumaroxidans (strain DSM 10017 / MPOB), this protein is ATP synthase subunit beta.